The sequence spans 315 residues: 4-hydroxy-3-methylbut-2-enyl diphosphate reductase (315 aa).

[4Fe-4S] cluster is bound at residue Cys12. Residues His43 and His81 each coordinate (2E)-4-hydroxy-3-methylbut-2-enyl diphosphate. Positions 43 and 81 each coordinate dimethylallyl diphosphate. His43 and His81 together coordinate isopentenyl diphosphate. Cys103 contacts [4Fe-4S] cluster. Residue His131 coordinates (2E)-4-hydroxy-3-methylbut-2-enyl diphosphate. Residue His131 participates in dimethylallyl diphosphate binding. Residue His131 coordinates isopentenyl diphosphate. The active-site Proton donor is the Glu133. Thr170 serves as a coordination point for (2E)-4-hydroxy-3-methylbut-2-enyl diphosphate. Cys198 is a binding site for [4Fe-4S] cluster. Residues Ser226, Asn228, and Ser271 each coordinate (2E)-4-hydroxy-3-methylbut-2-enyl diphosphate. 3 residues coordinate dimethylallyl diphosphate: Ser226, Asn228, and Ser271. 3 residues coordinate isopentenyl diphosphate: Ser226, Asn228, and Ser271.

This sequence belongs to the IspH family. [4Fe-4S] cluster serves as cofactor.

The enzyme catalyses isopentenyl diphosphate + 2 oxidized [2Fe-2S]-[ferredoxin] + H2O = (2E)-4-hydroxy-3-methylbut-2-enyl diphosphate + 2 reduced [2Fe-2S]-[ferredoxin] + 2 H(+). It catalyses the reaction dimethylallyl diphosphate + 2 oxidized [2Fe-2S]-[ferredoxin] + H2O = (2E)-4-hydroxy-3-methylbut-2-enyl diphosphate + 2 reduced [2Fe-2S]-[ferredoxin] + 2 H(+). Its pathway is isoprenoid biosynthesis; dimethylallyl diphosphate biosynthesis; dimethylallyl diphosphate from (2E)-4-hydroxy-3-methylbutenyl diphosphate: step 1/1. It participates in isoprenoid biosynthesis; isopentenyl diphosphate biosynthesis via DXP pathway; isopentenyl diphosphate from 1-deoxy-D-xylulose 5-phosphate: step 6/6. Functionally, catalyzes the conversion of 1-hydroxy-2-methyl-2-(E)-butenyl 4-diphosphate (HMBPP) into a mixture of isopentenyl diphosphate (IPP) and dimethylallyl diphosphate (DMAPP). Acts in the terminal step of the DOXP/MEP pathway for isoprenoid precursor biosynthesis. This is 4-hydroxy-3-methylbut-2-enyl diphosphate reductase from Geobacillus sp. (strain WCH70).